A 329-amino-acid polypeptide reads, in one-letter code: Probable cell division protein WhiA (329 aa).

Positions 275-308 (SLEELGALADPPLTKDAVAGRIRRLLAMADKRAQ) form a DNA-binding region, H-T-H motif.

This sequence belongs to the WhiA family.

Functionally, involved in cell division and chromosome segregation. This is Probable cell division protein WhiA from Streptomyces griseus subsp. griseus (strain JCM 4626 / CBS 651.72 / NBRC 13350 / KCC S-0626 / ISP 5235).